Consider the following 312-residue polypeptide: MAHSHSHADSHLPKDNNARRLLFAFIVTAGFMLLEVVGGILSGSLALLADAGHMLTDAAALLFALLAVQFSRRPPTVRHTFGWLRLTTLAAFVNAIALVVITLLIVWEAIERFYTPRPVAGNLMMVIAVAGLLANLFAFWILHRGSDEKNLNVRAAALHVMGDLLGSVGAIVAALIIIWTGWTPADPILSILVSVLVLRSAWRLLKDSVNELLEGAPVSLDINALQRHLSREIPEVRNVHHVHVWMVGEKPVMTLHAQVIPPHDHDALLERIQDFLMHEYHIAHATIQMEYQVCHGPDCHLNQTSSGHVHHH.

A run of 5 helical transmembrane segments spans residues 21-41 (LLFAFIVTAGFMLLEVVGGIL), 48-68 (LADAGHMLTDAAALLFALLAV), 90-110 (AAFVNAIALVVITLLIVWEAI), 123-143 (LMMVIAVAGLLANLFAFWILH), and 164-184 (LLGSVGAIVAALIIIWTGWTP).

This sequence belongs to the cation diffusion facilitator (CDF) transporter (TC 2.A.4) family. SLC30A subfamily.

It is found in the cell inner membrane. Functionally, involved in zinc efflux across the cytoplasmic membrane, thus reducing zinc accumulation in the cytoplasm and rendering bacteria more resistant to zinc. It may contribute to zinc homeostasis at low concentrations of zinc. The polypeptide is Zinc transporter ZitB (Salmonella typhimurium (strain LT2 / SGSC1412 / ATCC 700720)).